A 274-amino-acid chain; its full sequence is Phosphoribosylaminoimidazole-succinocarboxamide synthase (274 aa).

Belongs to the SAICAR synthetase family.

It carries out the reaction 5-amino-1-(5-phospho-D-ribosyl)imidazole-4-carboxylate + L-aspartate + ATP = (2S)-2-[5-amino-1-(5-phospho-beta-D-ribosyl)imidazole-4-carboxamido]succinate + ADP + phosphate + 2 H(+). Its pathway is purine metabolism; IMP biosynthesis via de novo pathway; 5-amino-1-(5-phospho-D-ribosyl)imidazole-4-carboxamide from 5-amino-1-(5-phospho-D-ribosyl)imidazole-4-carboxylate: step 1/2. This is Phosphoribosylaminoimidazole-succinocarboxamide synthase from Nitrosopumilus maritimus (strain SCM1).